Here is a 1052-residue protein sequence, read N- to C-terminus: Malignant fibrous histiocytoma-amplified sequence 1 (1052 aa).

Ala2 is modified (N-acetylalanine). LRR repeat units lie at residues 64-85 (DIEA…LGSA), 88-109 (SLRV…VAEL), 112-133 (HLTE…VVSA), 136-157 (ELRK…LGAL), 159-180 (HLEE…LSCL), 182-203 (RLRT…LLQL), 205-226 (ALEE…ISAL), 228-249 (ALKI…FCEL), 251-272 (SLES…FSCL), 274-296 (RLKM…LPLA), 297-318 (GLEE…ISGL), 320-341 (RLLT…IVEL), and 343-364 (GLEE…FGQL). The required for interaction with PJA2 stretch occupies residues 64-364 (DIEALNLGNN…AVLPDHFGQL (301 aa)). Residues 64–649 (DIEALNLGNN…DKLLSVAEHR (586 aa)) form a required for interaction with PPP2R2A region. One can recognise a Roc domain in the interval 403-649 (QPAVQPRLKL…DKLLSVAEHR (247 aa)). Lys601 is subject to N6-acetyllysine.

In terms of assembly, interacts with RAF1. Interacts with HSPD1. Interacts with PPP2CA; retains PPP2CA into the cytoplasm and excludes it from the nucleus. Interacts with PPP2R2A; the interaction is direct. Interacts with PJA2. In terms of processing, ubiquitinated. Ubiquitination by PJA2 does not lead MFHAS1 to proteasomal degradation but positively regulates its function in polarization of macrophages. Ubiquitously expressed. Overexpressed in malignant fibrous histiocytomas. Expressed in red blood cells (at protein level).

Its subcellular location is the cytoplasm. Its function is as follows. Probable GTP-binding protein. Functions in innate immunity and more specifically the inflammatory response as a regulator of the Toll-like receptor TLR2 and TLR4 signaling pathways. Negatively regulates the part of the TLR4 signaling pathway that leads to the activation of the transcription factor AP-1. By retaining the phosphatase complex PP2A into the cytoplasm, prevents the dephosphorylation of the AP-1 subunit JUN which is required for proper activation of the transcription factor. Both inhibits and activates the TLR2-dependent signaling pathway. Positively regulates the TLR2 signaling pathway to activate specifically the downstream p38 and JNK MAP kinases and promote the polarization of macrophages toward the pro-inflammatory M1 phenotype. It may also play a role in the regulation of inflammation induced by high glucose through the PKB/AKT signaling pathway. Also involved in erythrocyte differentiation through activation of the ERK1/ERK2 signaling pathway. The chain is Malignant fibrous histiocytoma-amplified sequence 1 from Homo sapiens (Human).